The primary structure comprises 262 residues: Phosphatidylserine decarboxylase proenzyme (262 aa).

Catalysis depends on charge relay system; for autoendoproteolytic cleavage activity residues D86, H142, and S226. S226 functions as the Schiff-base intermediate with substrate; via pyruvic acid; for decarboxylase activity in the catalytic mechanism. S226 carries the post-translational modification Pyruvic acid (Ser); by autocatalysis.

It belongs to the phosphatidylserine decarboxylase family. PSD-B subfamily. Prokaryotic type I sub-subfamily. As to quaternary structure, heterodimer of a large membrane-associated beta subunit and a small pyruvoyl-containing alpha subunit. Requires pyruvate as cofactor. Post-translationally, is synthesized initially as an inactive proenzyme. Formation of the active enzyme involves a self-maturation process in which the active site pyruvoyl group is generated from an internal serine residue via an autocatalytic post-translational modification. Two non-identical subunits are generated from the proenzyme in this reaction, and the pyruvate is formed at the N-terminus of the alpha chain, which is derived from the carboxyl end of the proenzyme. The autoendoproteolytic cleavage occurs by a canonical serine protease mechanism, in which the side chain hydroxyl group of the serine supplies its oxygen atom to form the C-terminus of the beta chain, while the remainder of the serine residue undergoes an oxidative deamination to produce ammonia and the pyruvoyl prosthetic group on the alpha chain. During this reaction, the Ser that is part of the protease active site of the proenzyme becomes the pyruvoyl prosthetic group, which constitutes an essential element of the active site of the mature decarboxylase.

It localises to the cell membrane. It catalyses the reaction a 1,2-diacyl-sn-glycero-3-phospho-L-serine + H(+) = a 1,2-diacyl-sn-glycero-3-phosphoethanolamine + CO2. It participates in phospholipid metabolism; phosphatidylethanolamine biosynthesis; phosphatidylethanolamine from CDP-diacylglycerol: step 2/2. In terms of biological role, catalyzes the formation of phosphatidylethanolamine (PtdEtn) from phosphatidylserine (PtdSer). This chain is Phosphatidylserine decarboxylase proenzyme, found in Bacillus cereus (strain B4264).